The following is a 161-amino-acid chain: Large ribosomal subunit protein uL15 (161 aa).

Positions 1-47 are disordered; it reads MKLHELHDNPGANRKKKRVARGPGSGKGKTAGRGIKGQTSRSGVALN. The span at 23 to 35 shows a compositional bias: gly residues; that stretch reads PGSGKGKTAGRGI.

Belongs to the universal ribosomal protein uL15 family. In terms of assembly, part of the 50S ribosomal subunit.

Its function is as follows. Binds to the 23S rRNA. In Paracoccus denitrificans (strain Pd 1222), this protein is Large ribosomal subunit protein uL15.